Consider the following 568-residue polypeptide: Dihydroxy-acid dehydratase 1 (568 aa).

The segment at 1 to 22 (MAEQTNTPDLKPRSRDVTDGLE) is disordered. Basic and acidic residues predominate over residues 10-22 (LKPRSRDVTDGLE). Residue cysteine 57 coordinates [2Fe-2S] cluster. Aspartate 89 serves as a coordination point for Mg(2+). [2Fe-2S] cluster is bound at residue cysteine 130. Mg(2+) is bound by residues aspartate 131 and lysine 132. Lysine 132 carries the N6-carboxylysine modification. Residue cysteine 207 participates in [2Fe-2S] cluster binding. A Mg(2+)-binding site is contributed by glutamate 458. Catalysis depends on serine 484, which acts as the Proton acceptor.

This sequence belongs to the IlvD/Edd family. As to quaternary structure, homodimer. Requires [2Fe-2S] cluster as cofactor. It depends on Mg(2+) as a cofactor.

The enzyme catalyses (2R)-2,3-dihydroxy-3-methylbutanoate = 3-methyl-2-oxobutanoate + H2O. It catalyses the reaction (2R,3R)-2,3-dihydroxy-3-methylpentanoate = (S)-3-methyl-2-oxopentanoate + H2O. Its pathway is amino-acid biosynthesis; L-isoleucine biosynthesis; L-isoleucine from 2-oxobutanoate: step 3/4. It functions in the pathway amino-acid biosynthesis; L-valine biosynthesis; L-valine from pyruvate: step 3/4. Its function is as follows. Functions in the biosynthesis of branched-chain amino acids. Catalyzes the dehydration of (2R,3R)-2,3-dihydroxy-3-methylpentanoate (2,3-dihydroxy-3-methylvalerate) into 2-oxo-3-methylpentanoate (2-oxo-3-methylvalerate) and of (2R)-2,3-dihydroxy-3-methylbutanoate (2,3-dihydroxyisovalerate) into 2-oxo-3-methylbutanoate (2-oxoisovalerate), the penultimate precursor to L-isoleucine and L-valine, respectively. This is Dihydroxy-acid dehydratase 1 from Nocardia farcinica (strain IFM 10152).